The following is a 326-amino-acid chain: tRNA-modifying protein YgfZ (326 aa).

Residues Trp-27 and Trp-189 each contribute to the folate site.

The protein belongs to the tRNA-modifying YgfZ family.

The protein localises to the cytoplasm. Its function is as follows. Folate-binding protein involved in regulating the level of ATP-DnaA and in the modification of some tRNAs. It is probably a key factor in regulatory networks that act via tRNA modification, such as initiation of chromosomal replication. This chain is tRNA-modifying protein YgfZ, found in Escherichia coli O139:H28 (strain E24377A / ETEC).